We begin with the raw amino-acid sequence, 137 residues long: Proofreading thioesterase EntH (137 aa).

Glutamate 63 functions as the Nucleophile or proton acceptor in the catalytic mechanism.

It belongs to the thioesterase PaaI family. In terms of assembly, homotetramer. Dimer of dimers. Interacts specifically with the aryl carrier protein (ArCP) domain of EntB.

The protein localises to the cytoplasm. It functions in the pathway siderophore biosynthesis; enterobactin biosynthesis. In terms of biological role, required for optimal enterobactin synthesis. Acts as a proofreading enzyme that prevents EntB misacylation by hydrolyzing the thioester bound existing between EntB and wrongly charged molecules. The sequence is that of Proofreading thioesterase EntH from Salmonella paratyphi A (strain AKU_12601).